Here is a 71-residue protein sequence, read N- to C-terminus: Sec-independent protein translocase protein TatA (71 aa).

A helical membrane pass occupies residues 1–21; sequence MGSFSMGHWLIVLAIIVLLFG. Positions 41–57 are enriched in basic and acidic residues; the sequence is KEMEDETPVEKIEKADS. A disordered region spans residues 41 to 71; it reads KEMEDETPVEKIEKADSETQSTKQNETTKNV. The segment covering 58-71 has biased composition (polar residues); it reads ETQSTKQNETTKNV.

Belongs to the TatA/E family. As to quaternary structure, the Tat system comprises two distinct complexes: a TatABC complex, containing multiple copies of TatA, TatB and TatC subunits, and a separate TatA complex, containing only TatA subunits. Substrates initially bind to the TatABC complex, which probably triggers association of the separate TatA complex to form the active translocon.

The protein localises to the cell inner membrane. Functionally, part of the twin-arginine translocation (Tat) system that transports large folded proteins containing a characteristic twin-arginine motif in their signal peptide across membranes. TatA could form the protein-conducting channel of the Tat system. The sequence is that of Sec-independent protein translocase protein TatA from Campylobacter fetus subsp. fetus (strain 82-40).